Here is a 211-residue protein sequence, read N- to C-terminus: Thiamine-phosphate synthase (211 aa).

Residues 44–48 (QYRNK) and Asn75 each bind 4-amino-2-methyl-5-(diphosphooxymethyl)pyrimidine. Mg(2+) contacts are provided by Asp76 and Asp95. Ser114 is a 4-amino-2-methyl-5-(diphosphooxymethyl)pyrimidine binding site. 140 to 142 (TKS) serves as a coordination point for 2-[(2R,5Z)-2-carboxy-4-methylthiazol-5(2H)-ylidene]ethyl phosphate. 4-amino-2-methyl-5-(diphosphooxymethyl)pyrimidine is bound at residue Lys143. Gly171 contributes to the 2-[(2R,5Z)-2-carboxy-4-methylthiazol-5(2H)-ylidene]ethyl phosphate binding site.

This sequence belongs to the thiamine-phosphate synthase family. Mg(2+) serves as cofactor.

The enzyme catalyses 2-[(2R,5Z)-2-carboxy-4-methylthiazol-5(2H)-ylidene]ethyl phosphate + 4-amino-2-methyl-5-(diphosphooxymethyl)pyrimidine + 2 H(+) = thiamine phosphate + CO2 + diphosphate. The catalysed reaction is 2-(2-carboxy-4-methylthiazol-5-yl)ethyl phosphate + 4-amino-2-methyl-5-(diphosphooxymethyl)pyrimidine + 2 H(+) = thiamine phosphate + CO2 + diphosphate. It catalyses the reaction 4-methyl-5-(2-phosphooxyethyl)-thiazole + 4-amino-2-methyl-5-(diphosphooxymethyl)pyrimidine + H(+) = thiamine phosphate + diphosphate. Its pathway is cofactor biosynthesis; thiamine diphosphate biosynthesis; thiamine phosphate from 4-amino-2-methyl-5-diphosphomethylpyrimidine and 4-methyl-5-(2-phosphoethyl)-thiazole: step 1/1. Condenses 4-methyl-5-(beta-hydroxyethyl)thiazole monophosphate (THZ-P) and 2-methyl-4-amino-5-hydroxymethyl pyrimidine pyrophosphate (HMP-PP) to form thiamine monophosphate (TMP). This Koribacter versatilis (strain Ellin345) protein is Thiamine-phosphate synthase.